A 137-amino-acid chain; its full sequence is Basic phospholipase A2 beta-bungarotoxin A5 chain (137 aa).

The signal sequence occupies residues 1-9 (AVCVSLLGA). Residues 10–17 (ANIPPQHL) constitute a propeptide that is removed on maturation. Cystine bridges form between cysteine 44/cysteine 136, cysteine 46/cysteine 62, cysteine 61/cysteine 117, cysteine 68/cysteine 110, cysteine 78/cysteine 103, and cysteine 96/cysteine 108. 3 residues coordinate Ca(2+): tyrosine 45, glycine 47, and glycine 49. Histidine 65 is an active-site residue. Aspartate 66 serves as a coordination point for Ca(2+). Aspartate 111 is an active-site residue.

It belongs to the phospholipase A2 family. Group I subfamily. D49 sub-subfamily. In terms of assembly, heterodimer; disulfide-linked. The A chains have phospholipase A2 activity and the B chains show homology with the basic protease inhibitors. It depends on Ca(2+) as a cofactor. Expressed by the venom gland.

It is found in the secreted. The catalysed reaction is a 1,2-diacyl-sn-glycero-3-phosphocholine + H2O = a 1-acyl-sn-glycero-3-phosphocholine + a fatty acid + H(+). Snake venom phospholipase A2 (PLA2) that inhibits neuromuscular transmission by blocking acetylcholine release from the nerve termini. PLA2 catalyzes the calcium-dependent hydrolysis of the 2-acyl groups in 3-sn-phosphoglycerides. The chain is Basic phospholipase A2 beta-bungarotoxin A5 chain from Bungarus multicinctus (Many-banded krait).